The primary structure comprises 82 residues: Putative membrane protein insertion efficiency factor (82 aa).

The protein belongs to the UPF0161 family.

It localises to the cell inner membrane. In terms of biological role, could be involved in insertion of integral membrane proteins into the membrane. The protein is Putative membrane protein insertion efficiency factor of Francisella tularensis subsp. novicida (strain U112).